Reading from the N-terminus, the 150-residue chain is Sulfur-rich protein, serovars L1/L3 (150 aa).

The segment at 1-20 is disordered; that stretch reads MSTVPVVQGAGSSNSAQDIS. 2 consecutive transmembrane segments (helical) span residues 43–63 and 69–89; these read VGLV…VSAA and IYLA…ILSM.

Its subcellular location is the membrane. This Chlamydia trachomatis protein is Sulfur-rich protein, serovars L1/L3 (srp).